A 268-amino-acid polypeptide reads, in one-letter code: Eukaryotic translation initiation factor 3 subunit G-2 (268 aa).

The 79-residue stretch at 187 to 265 (SAVRISNLSE…LILCVEWSKP (79 aa)) folds into the RRM domain.

The protein belongs to the eIF-3 subunit G family. In terms of assembly, component of the eukaryotic translation initiation factor 3 (eIF-3) complex. The eIF-3 complex interacts with pix.

It is found in the cytoplasm. In terms of biological role, RNA-binding component of the eukaryotic translation initiation factor 3 (eIF-3) complex, which is involved in protein synthesis of a specialized repertoire of mRNAs and, together with other initiation factors, stimulates binding of mRNA and methionyl-tRNAi to the 40S ribosome. The eIF-3 complex specifically targets and initiates translation of a subset of mRNAs involved in cell proliferation. This subunit can bind 18S rRNA. This is Eukaryotic translation initiation factor 3 subunit G-2 from Drosophila willistoni (Fruit fly).